Here is a 185-residue protein sequence, read N- to C-terminus: Tetratricopeptide repeat protein 36 homolog (185 aa).

3 TPR repeats span residues 53-86, 88-119, and 125-158; these read SREL…AQRA, VLNN…ANDQ, and CHAH…GSKF.

The protein belongs to the TTC36 family.

This Drosophila melanogaster (Fruit fly) protein is Tetratricopeptide repeat protein 36 homolog.